Here is a 423-residue protein sequence, read N- to C-terminus: Glutamate-1-semialdehyde 2,1-aminomutase (423 aa).

N6-(pyridoxal phosphate)lysine is present on Lys262.

This sequence belongs to the class-III pyridoxal-phosphate-dependent aminotransferase family. HemL subfamily. As to quaternary structure, homodimer. The cofactor is pyridoxal 5'-phosphate.

It localises to the cytoplasm. It catalyses the reaction (S)-4-amino-5-oxopentanoate = 5-aminolevulinate. It functions in the pathway porphyrin-containing compound metabolism; protoporphyrin-IX biosynthesis; 5-aminolevulinate from L-glutamyl-tRNA(Glu): step 2/2. The sequence is that of Glutamate-1-semialdehyde 2,1-aminomutase from Campylobacter fetus subsp. fetus (strain 82-40).